The chain runs to 73 residues: Putative antitoxin VapB38 (73 aa).

In terms of biological role, probable antitoxin component of a type II toxin-antitoxin (TA) system. Its putative cognate toxin is VapC38. The polypeptide is Putative antitoxin VapB38 (vapB38) (Mycobacterium tuberculosis (strain ATCC 25618 / H37Rv)).